A 274-amino-acid chain; its full sequence is Penicillin-insensitive murein endopeptidase (274 aa).

Residues 1–19 form the signal peptide; sequence MNKTAIALLALLASSASLA. 3 cysteine pairs are disulfide-bonded: Cys-44-Cys-265, Cys-187-Cys-235, and Cys-216-Cys-223. Positions 110, 113, 120, 147, 150, and 211 each coordinate Zn(2+). The segment at 227-274 is disordered; that stretch reads PLPPPGDGCGAELQSWFEPPKPGTTKPEKKTPPPLPPSCQALLDEHVI.

The protein belongs to the peptidase M74 family. Dimer. Requires Zn(2+) as cofactor.

Its subcellular location is the periplasm. Murein endopeptidase that cleaves the D-alanyl-meso-2,6-diamino-pimelyl amide bond that connects peptidoglycan strands. Likely plays a role in the removal of murein from the sacculus. The chain is Penicillin-insensitive murein endopeptidase from Escherichia coli O6:K15:H31 (strain 536 / UPEC).